The chain runs to 1071 residues: Nonribosomal peptide synthetase flvI (1071 aa).

The interval 33-417 is adenylation; it reads RRVLEQHDAP…GSLHFISRKD (385 aa). One can recognise a Carrier domain in the interval 552–628; sequence MPLTEIELKM…MLCQNIKTDV (77 aa). Ser-589 is subject to O-(pantetheine 4'-phosphoryl)serine. The interval 689-961 is condensation; sequence NYTLRLEFKL…IDDRDIEQLS (273 aa).

The protein belongs to the NRP synthetase family.

The catalysed reaction is (2S)-5,5-dimethylpiperidine-2-carboxylate + 10-hydroxy-pre-flavunoidine + ATP = flavunoidine + AMP + diphosphate + H(+). Its pathway is secondary metabolite biosynthesis; terpenoid biosynthesis. Functionally, nonribosomal peptide synthetase; part of the gene cluster that mediates the biosynthesis of flavunoidine, an alkaloidal terpenoid with a tetracyclic cage-like core connected to dimethylcadaverine via a C-N bond and acylated with 5,5-dimethyl-L-pipecolate. The tetracyclic core is synthesized by the terpene cyclase flvE and the cytochrome P450 monooxygenase flvD. The terpene cyclase flvE catalyzes the cyclization of farnesyl pyrophosphate (FPP) to form (1R,4R,5S)-(+)-acoradiene and the cytochrome P450 monooxygenase flvD is then responsible for oxidative conversion of (1R,4R,5S)-(+)-acoradiene into the tetracyclic cage present in the final product flavunoidine. In parallel, the N-methyltransferase flvH dimethylates L-lysine to give N,N-dimethyl-L-Lysin which is decarboxylated by flvG to afford dimethylcadaverine. The terpene cyclase-like protein flvF is the enzyme that attaches the dimethylcadaverine precusor at the C-7 of the tetracyclic cage to yield pre-flavunoidine. The cytochrome monooxygenase flvC hydroxylates the C-10 position of pre-flavunoidine whereas the NRPS flvI acylates the terpenoid core at the hydroxylated C-10 with dimethylpipecolate to yield final flavunoidine. The bifunctional enzyme flvA and the dehydrogenase flvB are responsible for the synthesis of the dimethylpipecolate precursor. The PLP-dependent lyase domain of flvA might use L-O-acetyl-homoserine and alpha-keto-isovalerate to form an intermediary ketone that can cyclize intramolecularly to yield an imine. The imine can be reduced by flvB to yield the 6-carboxylated pipecolate. The C-terminal alpha-KG-dependent oxygenase domain of flvA is then proposed to catalyze the decarboxylation to yield dimethylpipecolate. The protein is Nonribosomal peptide synthetase flvI of Aspergillus flavus (strain ATCC 200026 / FGSC A1120 / IAM 13836 / NRRL 3357 / JCM 12722 / SRRC 167).